The primary structure comprises 1702 residues: Immunoglobulin A1 protease autotransporter (1702 aa).

A signal peptide spans 1–25 (MLNKKFKLNFIALTVAYALTPYTEA). The Peptidase S6 domain maps to 26–332 (ALVRDDVDYQ…NIYKPEFAKT (307 aa)). The active site involves Ser288. Residues 991–1411 (VEKRNQTVDT…GSDRSTVALR (421 aa)) form a disordered region. Positions 997–1021 (TVDTTNITTPNNIQADVPSVPSNNE) are enriched in polar residues. Residues 1037 to 1047 (TPSETTETVAE) show a composition bias toward low complexity. A compositionally biased stretch (basic and acidic residues) spans 1049–1061 (SKQESKTVEKNEQ). Positions 1082–1095 (KANTQTNEVAQSGS) are enriched in polar residues. 2 stretches are compositionally biased toward basic and acidic residues: residues 1104–1132 (EIKE…KDEI) and 1150–1162 (APKE…KVEE). 2 tandem repeats follow at residues 1109–1116 (AKVEKEEK) and 1117–1124 (AKVEKEEK). Residues 1109 to 1124 (AKVEKEEKAKVEKEEK) are 2 X 8 AA tandem repeats of A-K-V-E-K-E-E-K. 2 stretches are compositionally biased toward polar residues: residues 1163–1186 (TQVQ…SPNS) and 1207–1218 (VSKNQTENTTDQ). Over residues 1219–1234 (PTEREKTAKVETEKTQ) the composition is skewed to basic and acidic residues. 3 stretches are compositionally biased toward polar residues: residues 1235–1255 (EPPQ…TVQP), 1263–1305 (NVPT…TAIT), and 1316–1341 (TETA…VANN). Over residues 1360 to 1378 (ETSAEETTAASTDETTIAD) the composition is skewed to low complexity. Basic residues predominate over residues 1382 to 1392 (RSKPNRRSRRS). The Autotransporter domain maps to 1450–1702 (NNEGQYNVWV…TAELKLSFSF (253 aa)).

Its subcellular location is the periplasm. The protein resides in the secreted. It is found in the cell surface. The protein localises to the cell outer membrane. It carries out the reaction Cleavage of immunoglobulin A molecules at certain Pro-|-Xaa bonds in the hinge region. No small molecule substrates are known.. Virulence factor; cleaves host immunoglobulin A producing intact Fc and Fab fragments. The sequence is that of Immunoglobulin A1 protease autotransporter (iga) from Haemophilus influenzae.